The primary structure comprises 102 residues: Small ribosomal subunit protein uS10 (102 aa).

It belongs to the universal ribosomal protein uS10 family. Part of the 30S ribosomal subunit.

Its function is as follows. Involved in the binding of tRNA to the ribosomes. The chain is Small ribosomal subunit protein uS10 from Pelobacter propionicus (strain DSM 2379 / NBRC 103807 / OttBd1).